The chain runs to 214 residues: Orotidine 5'-phosphate decarboxylase (214 aa).

Residues D11, K33, 59 to 68, S114, 164 to 174, G187, and R188 each bind substrate; these read DFKIADIPNT and PGIGSQGGRAS. K61 (proton donor) is an active-site residue.

The protein belongs to the OMP decarboxylase family. Type 1 subfamily. In terms of assembly, homodimer.

It catalyses the reaction orotidine 5'-phosphate + H(+) = UMP + CO2. Its pathway is pyrimidine metabolism; UMP biosynthesis via de novo pathway; UMP from orotate: step 2/2. Catalyzes the decarboxylation of orotidine 5'-monophosphate (OMP) to uridine 5'-monophosphate (UMP). This is Orotidine 5'-phosphate decarboxylase from Thermoplasma acidophilum (strain ATCC 25905 / DSM 1728 / JCM 9062 / NBRC 15155 / AMRC-C165).